Reading from the N-terminus, the 152-residue chain is Ribosome maturation factor RimP (152 aa).

The protein belongs to the RimP family.

It localises to the cytoplasm. In terms of biological role, required for maturation of 30S ribosomal subunits. The protein is Ribosome maturation factor RimP of Serratia proteamaculans (strain 568).